The sequence spans 72 residues: Translation initiation factor IF-1 (72 aa).

The S1-like domain occupies 1–72; that stretch reads MSKNDVIEVE…TRGRIVYRFK (72 aa).

It belongs to the IF-1 family. In terms of assembly, component of the 30S ribosomal translation pre-initiation complex which assembles on the 30S ribosome in the order IF-2 and IF-3, IF-1 and N-formylmethionyl-tRNA(fMet); mRNA recruitment can occur at any time during PIC assembly.

It is found in the cytoplasm. Its function is as follows. One of the essential components for the initiation of protein synthesis. Stabilizes the binding of IF-2 and IF-3 on the 30S subunit to which N-formylmethionyl-tRNA(fMet) subsequently binds. Helps modulate mRNA selection, yielding the 30S pre-initiation complex (PIC). Upon addition of the 50S ribosomal subunit IF-1, IF-2 and IF-3 are released leaving the mature 70S translation initiation complex. In Desulforamulus reducens (strain ATCC BAA-1160 / DSM 100696 / MI-1) (Desulfotomaculum reducens), this protein is Translation initiation factor IF-1.